Consider the following 65-residue polypeptide: Prokaryotic ubiquitin-like protein Pup (65 aa).

The span at 1 to 14 shows a compositional bias: basic and acidic residues; it reads MSGHEQQRPSRREE. Residues 1–35 are disordered; the sequence is MSGHEQQRPSRREEDVEETPVVPAQAGAQAKESDA. Positions 21–59 are ARC ATPase binding; that stretch reads VVPAQAGAQAKESDADVDALLDEIDEVLESNSEEFVRGF. Residues 26-49 adopt a coiled-coil conformation; it reads AGAQAKESDADVDALLDEIDEVLE. Gln-65 bears the Deamidated glutamine mark. Gln-65 is covalently cross-linked (Isoglutamyl lysine isopeptide (Gln-Lys) (interchain with K-? in acceptor proteins)).

The protein belongs to the prokaryotic ubiquitin-like protein family. Strongly interacts with the proteasome-associated ATPase ARC through a hydrophobic interface; the interacting region of Pup lies in its C-terminal half. There is one Pup binding site per ARC hexamer ring. Post-translationally, is modified by deamidation of its C-terminal glutamine to glutamate by the deamidase Dop, a prerequisite to the subsequent pupylation process.

Its pathway is protein degradation; proteasomal Pup-dependent pathway. Functionally, protein modifier that is covalently attached to lysine residues of substrate proteins, thereby targeting them for proteasomal degradation. The tagging system is termed pupylation. This Kineococcus radiotolerans (strain ATCC BAA-149 / DSM 14245 / SRS30216) protein is Prokaryotic ubiquitin-like protein Pup.